Here is a 344-residue protein sequence, read N- to C-terminus: Ferrochelatase (344 aa).

Histidine 196 and glutamate 277 together coordinate Fe cation.

Belongs to the ferrochelatase family.

The protein localises to the cytoplasm. The enzyme catalyses heme b + 2 H(+) = protoporphyrin IX + Fe(2+). The protein operates within porphyrin-containing compound metabolism; protoheme biosynthesis; protoheme from protoporphyrin-IX: step 1/1. In terms of biological role, catalyzes the ferrous insertion into protoporphyrin IX. This is Ferrochelatase from Synechococcus sp. (strain JA-2-3B'a(2-13)) (Cyanobacteria bacterium Yellowstone B-Prime).